Consider the following 240-residue polypeptide: 7-cyano-7-deazaguanine synthase (240 aa).

9-19 serves as a coordination point for ATP; that stretch reads FSGGLDSTACL. Residues Cys195, Cys210, Cys213, and Cys216 each coordinate Zn(2+).

Belongs to the QueC family. It depends on Zn(2+) as a cofactor.

The enzyme catalyses 7-carboxy-7-deazaguanine + NH4(+) + ATP = 7-cyano-7-deazaguanine + ADP + phosphate + H2O + H(+). Its pathway is purine metabolism; 7-cyano-7-deazaguanine biosynthesis. Functionally, catalyzes the ATP-dependent conversion of 7-carboxy-7-deazaguanine (CDG) to 7-cyano-7-deazaguanine (preQ(0)). The chain is 7-cyano-7-deazaguanine synthase from Pyrococcus furiosus (strain ATCC 43587 / DSM 3638 / JCM 8422 / Vc1).